The following is a 437-amino-acid chain: Ankyrin repeat domain-containing protein OPG015 (437 aa).

3 ANK repeats span residues 117-146 (QDLLLYYLSNAYVEIDIVDLMVDHGAVIYK), 220-249 (GGRTLLYRAIYAGYIDLVSWLLENGANVNA), and 253-290 (NGYTCLDVAVDRGSVIARREAHLKILEILLREPLSIDC).

The protein belongs to the orthopoxvirus OPG015 family.

Functionally, may be involved in virus-host protein interaction through the ankyrin repeats. The chain is Ankyrin repeat domain-containing protein OPG015 (OPG015) from Monkeypox virus.